The sequence spans 298 residues: Lipoyl synthase (298 aa).

Residues Cys40, Cys45, Cys51, Cys67, Cys71, Cys74, and Ser280 each contribute to the [4Fe-4S] cluster site. A Radical SAM core domain is found at 53–269 (AVRKTATFMI…KEIALSKGFS (217 aa)).

Belongs to the radical SAM superfamily. Lipoyl synthase family. [4Fe-4S] cluster is required as a cofactor.

It is found in the cytoplasm. The enzyme catalyses [[Fe-S] cluster scaffold protein carrying a second [4Fe-4S](2+) cluster] + N(6)-octanoyl-L-lysyl-[protein] + 2 oxidized [2Fe-2S]-[ferredoxin] + 2 S-adenosyl-L-methionine + 4 H(+) = [[Fe-S] cluster scaffold protein] + N(6)-[(R)-dihydrolipoyl]-L-lysyl-[protein] + 4 Fe(3+) + 2 hydrogen sulfide + 2 5'-deoxyadenosine + 2 L-methionine + 2 reduced [2Fe-2S]-[ferredoxin]. It functions in the pathway protein modification; protein lipoylation via endogenous pathway; protein N(6)-(lipoyl)lysine from octanoyl-[acyl-carrier-protein]. In terms of biological role, catalyzes the radical-mediated insertion of two sulfur atoms into the C-6 and C-8 positions of the octanoyl moiety bound to the lipoyl domains of lipoate-dependent enzymes, thereby converting the octanoylated domains into lipoylated derivatives. The polypeptide is Lipoyl synthase (Bacillus cereus (strain B4264)).